Consider the following 82-residue polypeptide: Large ribosomal subunit protein bL27 (82 aa).

The segment at 1–26 (MAHKKGQGASRNGRDSESKRLGMKVG) is disordered.

Belongs to the bacterial ribosomal protein bL27 family.

In Chlamydia felis (strain Fe/C-56) (Chlamydophila felis), this protein is Large ribosomal subunit protein bL27.